We begin with the raw amino-acid sequence, 222 residues long: Cytidylate kinase (222 aa).

7–15 serves as a coordination point for ATP; it reads GPSASGKSS.

It belongs to the cytidylate kinase family. Type 1 subfamily.

The protein localises to the cytoplasm. The enzyme catalyses CMP + ATP = CDP + ADP. The catalysed reaction is dCMP + ATP = dCDP + ADP. This is Cytidylate kinase from Borrelia turicatae (strain 91E135).